Consider the following 62-residue polypeptide: Conotoxin Gm5.2 (62 aa).

Residues 1–22 (MRCLPVFVILLLLIASAPSVDA) form the signal peptide. A propeptide spanning residues 23–49 (QPKTKDDVPLAPLHDNIRSTLQTLRKK) is cleaved from the precursor. Residue Ser-60 is modified to Serine amide.

The protein belongs to the conotoxin T superfamily. Post-translationally, contains 2 disulfide bonds that can be either 'C1-C3, C2-C4' or 'C1-C4, C2-C3', since these disulfide connectivities have been observed for conotoxins with cysteine framework V (for examples, see AC P0DQQ7 and AC P81755). In terms of tissue distribution, expressed by the venom duct.

It localises to the secreted. The sequence is that of Conotoxin Gm5.2 from Conus gloriamaris (Glory-of-the-Sea cone).